The sequence spans 78 residues: Exodeoxyribonuclease 7 small subunit (78 aa).

Belongs to the XseB family. In terms of assembly, heterooligomer composed of large and small subunits.

The protein localises to the cytoplasm. It carries out the reaction Exonucleolytic cleavage in either 5'- to 3'- or 3'- to 5'-direction to yield nucleoside 5'-phosphates.. Its function is as follows. Bidirectionally degrades single-stranded DNA into large acid-insoluble oligonucleotides, which are then degraded further into small acid-soluble oligonucleotides. The polypeptide is Exodeoxyribonuclease 7 small subunit (Idiomarina loihiensis (strain ATCC BAA-735 / DSM 15497 / L2-TR)).